Consider the following 584-residue polypeptide: Phosphoinositide phospholipase C 7 (584 aa).

In terms of domain architecture, EF-hand-like spans 26 to 102 (EIKTLFDNYS…NSPLSSLEVH (77 aa)). The 146-residue stretch at 103-248 (QDMDAPLSHY…LKKRIMISTK (146 aa)) folds into the PI-PLC X-box domain. Catalysis depends on residues His-118 and His-164. Positions 285-318 (DRSVDKNDSNGDDDDDDDDDDDDDDGDDKIKKNA) are disordered. Ser-287 carries the phosphoserine modification. Residues 294-311 (NGDDDDDDDDDDDDDDGD) are compositionally biased toward acidic residues. The PI-PLC Y-box domain occupies 323-439 (KHLIAIEAGK…GYIKKPDLLL (117 aa)). The region spanning 433–566 (KKPDLLLKSN…QGIRAVPLRN (134 aa)) is the C2 domain.

Ca(2+) serves as cofactor. As to expression, expressed in leaves, roots, flowers and siliques.

Its subcellular location is the cell membrane. It carries out the reaction a 1,2-diacyl-sn-glycero-3-phospho-(1D-myo-inositol-4,5-bisphosphate) + H2O = 1D-myo-inositol 1,4,5-trisphosphate + a 1,2-diacyl-sn-glycerol + H(+). Functionally, the production of the second messenger molecules diacylglycerol (DAG) and inositol 1,4,5-trisphosphate (IP3) is mediated by activated phosphatidylinositol-specific phospholipase C enzymes. The sequence is that of Phosphoinositide phospholipase C 7 (PLC7) from Arabidopsis thaliana (Mouse-ear cress).